We begin with the raw amino-acid sequence, 100 residues long: Signal recognition particle 19 kDa protein (100 aa).

This sequence belongs to the SRP19 family. As to quaternary structure, part of the signal recognition particle protein translocation system, which is composed of SRP and FtsY. Archaeal SRP consists of a 7S RNA molecule of 300 nucleotides and two protein subunits: SRP54 and SRP19.

It is found in the cytoplasm. In terms of biological role, involved in targeting and insertion of nascent membrane proteins into the cytoplasmic membrane. Binds directly to 7S RNA and mediates binding of the 54 kDa subunit of the SRP. This is Signal recognition particle 19 kDa protein from Caldivirga maquilingensis (strain ATCC 700844 / DSM 13496 / JCM 10307 / IC-167).